A 429-amino-acid polypeptide reads, in one-letter code: Kynureninase (429 aa).

Residues leucine 109, threonine 110, 137–140 (FPSD), aspartate 222, histidine 225, and tyrosine 247 contribute to the pyridoxal 5'-phosphate site. Lysine 248 is modified (N6-(pyridoxal phosphate)lysine). Pyridoxal 5'-phosphate contacts are provided by tryptophan 278 and asparagine 306.

The protein belongs to the kynureninase family. In terms of assembly, homodimer. It depends on pyridoxal 5'-phosphate as a cofactor.

It catalyses the reaction L-kynurenine + H2O = anthranilate + L-alanine + H(+). It carries out the reaction 3-hydroxy-L-kynurenine + H2O = 3-hydroxyanthranilate + L-alanine + H(+). Its pathway is amino-acid degradation; L-kynurenine degradation; L-alanine and anthranilate from L-kynurenine: step 1/1. It participates in cofactor biosynthesis; NAD(+) biosynthesis; quinolinate from L-kynurenine: step 2/3. Catalyzes the cleavage of L-kynurenine (L-Kyn) and L-3-hydroxykynurenine (L-3OHKyn) into anthranilic acid (AA) and 3-hydroxyanthranilic acid (3-OHAA), respectively. In Salinispora tropica (strain ATCC BAA-916 / DSM 44818 / JCM 13857 / NBRC 105044 / CNB-440), this protein is Kynureninase.